The primary structure comprises 222 residues: MARTATIKRDTNETKIQIALSLDGGFLAVEESIFKKRKIDDDDEHAKQATSSQVINVQSGIGFLDHMLHALAKHAGWSLIVECIGDLHIDDHHTAEDVGITLGIAFKQALGQVKGVKRFGSGFAPLDEALSRAVVDLSNRPFAVVELGLKREKIGDLSCEMIPHVLESFAQGAHITMHVDCLRGFNDHHRAESAFKALAVAIREAISSNGTNDVPSTKGVLF.

Belongs to the imidazoleglycerol-phosphate dehydratase family.

It catalyses the reaction D-erythro-1-(imidazol-4-yl)glycerol 3-phosphate = 3-(imidazol-4-yl)-2-oxopropyl phosphate + H2O. It participates in amino-acid biosynthesis; L-histidine biosynthesis; L-histidine from 5-phospho-alpha-D-ribose 1-diphosphate: step 6/9. This Scheffersomyces stipitis (strain ATCC 58785 / CBS 6054 / NBRC 10063 / NRRL Y-11545) (Yeast) protein is Imidazoleglycerol-phosphate dehydratase (HIS3).